A 311-amino-acid chain; its full sequence is Acetyl-coenzyme A carboxylase carboxyl transferase subunit beta (311 aa).

The region spanning 27–296 is the CoA carboxyltransferase N-terminal domain; that stretch reads LWTKCGHCSA…AEAADAPEAG (270 aa). Residues Cys-31, Cys-34, Cys-50, and Cys-53 each coordinate Zn(2+). Residues 31–53 form a C4-type zinc finger; it reads CGHCSAVLYRPELERNQEVCPKC. Residues 286 to 299 show a composition bias toward low complexity; it reads AAEAADAPEAGEQP. The segment at 286-311 is disordered; sequence AAEAADAPEAGEQPSEATDPVGEHWD.

It belongs to the AccD/PCCB family. As to quaternary structure, acetyl-CoA carboxylase is a heterohexamer composed of biotin carboxyl carrier protein (AccB), biotin carboxylase (AccC) and two subunits each of ACCase subunit alpha (AccA) and ACCase subunit beta (AccD). It depends on Zn(2+) as a cofactor.

Its subcellular location is the cytoplasm. It carries out the reaction N(6)-carboxybiotinyl-L-lysyl-[protein] + acetyl-CoA = N(6)-biotinyl-L-lysyl-[protein] + malonyl-CoA. Its pathway is lipid metabolism; malonyl-CoA biosynthesis; malonyl-CoA from acetyl-CoA: step 1/1. In terms of biological role, component of the acetyl coenzyme A carboxylase (ACC) complex. Biotin carboxylase (BC) catalyzes the carboxylation of biotin on its carrier protein (BCCP) and then the CO(2) group is transferred by the transcarboxylase to acetyl-CoA to form malonyl-CoA. In Alkalilimnicola ehrlichii (strain ATCC BAA-1101 / DSM 17681 / MLHE-1), this protein is Acetyl-coenzyme A carboxylase carboxyl transferase subunit beta.